The primary structure comprises 118 residues: Small ribosomal subunit protein uS13 (118 aa).

Residues 94–118 (GLPVRGQRTKTNARTRKGPRKPIKK) form a disordered region.

The protein belongs to the universal ribosomal protein uS13 family. Part of the 30S ribosomal subunit. Forms a loose heterodimer with protein S19. Forms two bridges to the 50S subunit in the 70S ribosome.

Located at the top of the head of the 30S subunit, it contacts several helices of the 16S rRNA. In the 70S ribosome it contacts the 23S rRNA (bridge B1a) and protein L5 of the 50S subunit (bridge B1b), connecting the 2 subunits; these bridges are implicated in subunit movement. Contacts the tRNAs in the A and P-sites. This Tolumonas auensis (strain DSM 9187 / NBRC 110442 / TA 4) protein is Small ribosomal subunit protein uS13.